A 62-amino-acid chain; its full sequence is Large ribosomal subunit protein bL28 (62 aa).

The protein belongs to the bacterial ribosomal protein bL28 family.

This is Large ribosomal subunit protein bL28 from Streptococcus equi subsp. equi (strain 4047).